A 394-amino-acid polypeptide reads, in one-letter code: Enoyl-[acyl-carrier-protein] reductase [NADH] (394 aa).

Residues 48–53 (GASTGY), 74–75 (YE), 111–112 (DA), and 139–140 (LA) each bind NAD(+). A substrate-binding site is contributed by Tyr-225. The Proton donor role is filled by Tyr-235. NAD(+) is bound by residues Lys-244 and 273–275 (LVT).

It belongs to the TER reductase family. In terms of assembly, monomer.

The enzyme catalyses a 2,3-saturated acyl-[ACP] + NAD(+) = a (2E)-enoyl-[ACP] + NADH + H(+). Its pathway is lipid metabolism; fatty acid biosynthesis. Its function is as follows. Involved in the final reduction of the elongation cycle of fatty acid synthesis (FAS II). Catalyzes the reduction of a carbon-carbon double bond in an enoyl moiety that is covalently linked to an acyl carrier protein (ACP). The chain is Enoyl-[acyl-carrier-protein] reductase [NADH] from Opitutus terrae (strain DSM 11246 / JCM 15787 / PB90-1).